The chain runs to 319 residues: Thioredoxin reductase (319 aa).

Residues 11–14 (SGPA), 40–41 (VA), glutamine 45, asparagine 54, valine 87, cysteine 145, aspartate 288, and 295–297 (RQA) each bind FAD. The cysteines at positions 142 and 145 are disulfide-linked.

It belongs to the class-II pyridine nucleotide-disulfide oxidoreductase family. Homodimer. It depends on FAD as a cofactor.

It localises to the cytoplasm. It carries out the reaction [thioredoxin]-dithiol + NADP(+) = [thioredoxin]-disulfide + NADPH + H(+). The sequence is that of Thioredoxin reductase (TRR1) from Eremothecium gossypii (strain ATCC 10895 / CBS 109.51 / FGSC 9923 / NRRL Y-1056) (Yeast).